We begin with the raw amino-acid sequence, 567 residues long: Urease subunit alpha (567 aa).

In terms of domain architecture, Urease spans 129 to 567 (GGVDTHIHFI…LPMAQRYFLF (439 aa)). Residues H134, H136, and K217 each contribute to the Ni(2+) site. At K217 the chain carries N6-carboxylysine. H219 contributes to the substrate binding site. Positions 246 and 272 each coordinate Ni(2+). The active-site Proton donor is the H320. D360 lines the Ni(2+) pocket.

This sequence belongs to the metallo-dependent hydrolases superfamily. Urease alpha subunit family. As to quaternary structure, heterotrimer of UreA (gamma), UreB (beta) and UreC (alpha) subunits. Three heterotrimers associate to form the active enzyme. Requires Ni cation as cofactor. Post-translationally, carboxylation allows a single lysine to coordinate two nickel ions.

Its subcellular location is the cytoplasm. It carries out the reaction urea + 2 H2O + H(+) = hydrogencarbonate + 2 NH4(+). Its pathway is nitrogen metabolism; urea degradation; CO(2) and NH(3) from urea (urease route): step 1/1. This is Urease subunit alpha from Proteus hauseri.